The primary structure comprises 555 residues: Glypican-6 (555 aa).

The N-terminal stretch at 1 to 23 (MPSWIRAVILPLSGLLLTLPAAA) is a signal peptide. The segment covering 348-357 (PALRSARSAP) has biased composition (low complexity). Disordered regions lie at residues 348–376 (PALR…PTTA) and 480–501 (GNDV…GSGC). The GPI-anchor amidated serine moiety is linked to residue Ser530. The propeptide at 531–555 (ASKFSSSLISWSLVCMVLALQRLYR) is removed in mature form.

The protein belongs to the glypican family. As to expression, in the cartilage growth-plate, gradient of expression with highest levels from the proliferative and pre-hypertrophic zones to lowest, if any, in the hypertrophic zones (at protein level).

It localises to the cell membrane. It is found in the secreted. Its subcellular location is the extracellular space. In terms of biological role, cell surface proteoglycan that bears heparan sulfate. Putative cell surface coreceptor for growth factors, extracellular matrix proteins, proteases and anti-proteases. Enhances migration and invasion of cancer cells through WNT5A signaling. The chain is Glypican-6 (Gpc6) from Mus musculus (Mouse).